A 436-amino-acid chain; its full sequence is Succinyl-CoA:glutarate CoA-transferase (436 aa).

Residues methionine 1–alanine 8 constitute a mitochondrion transit peptide. The active-site Nucleophile is aspartate 203. Residues lysine 392 and lysine 423 each carry the N6-acetyllysine modification.

Belongs to the CoA-transferase III family.

It is found in the mitochondrion. It carries out the reaction glutarate + succinyl-CoA = glutaryl-CoA + succinate. It catalyses the reaction 3-hydroxy-3-methylglutarate + succinyl-CoA = (3S)-3-hydroxy-3-methylglutaryl-CoA + succinate. The catalysed reaction is 3-hydroxy-3-methylglutarate + glutaryl-CoA = (3S)-3-hydroxy-3-methylglutaryl-CoA + glutarate. The enzyme catalyses hexanedioate + glutaryl-CoA = hexanedioyl-CoA + glutarate. It carries out the reaction itaconate + glutaryl-CoA = itaconyl-CoA + glutarate. It catalyses the reaction itaconate + succinyl-CoA = itaconyl-CoA + succinate. In terms of biological role, coenzyme A (CoA) transferase that reversibly catalyzes the transfer of a CoA moiety from a dicarboxyl-CoA to a dicarboxylate in a metabolite recycling process. Displays preference for succinyl-CoA and glutarate-CoA as dicarboxyl-CoA donors and glutarate, succinate, adipate/hexanedioate, itaconate and 3-hydroxy-3-methylglutarate as dicarboxylate acceptors. Acts on intermediates or end products of lysine and tryptophan degradation pathway, in particular catalyzes succinyl-CoA-dependent reesterification of free glutarate into glutaryl-CoA to prevent renal excretion of glutarate. Upon inflammation, may convert macrophage-derived itaconate to itaconyl-CoA in erythroid precursors where it negatively regulates the TCA cycle and heme synthesis to limit erythroid differentiation in the context of stress erythropoiesis. This chain is Succinyl-CoA:glutarate CoA-transferase, found in Mus musculus (Mouse).